The following is a 132-amino-acid chain: Large ribosomal subunit protein eL8 (132 aa).

N6-acetyllysine; alternate is present on K8. Residue K8 forms a Glycyl lysine isopeptide (Lys-Gly) (interchain with G-Cter in SUMO2); alternate linkage. K36 is covalently cross-linked (Glycyl lysine isopeptide (Lys-Gly) (interchain with G-Cter in SUMO2)). K128 carries the N6-acetyllysine modification.

Belongs to the eukaryotic ribosomal protein eL8 family. Component of the large ribosomal subunit. Interacts with CRY1. Interacts with DICER1, AGO2, TARBP2, MOV10 and EIF6; they form a large RNA-induced silencing complex (RISC).

It is found in the cytoplasm. Its function is as follows. Component of the large ribosomal subunit. The ribosome is a large ribonucleoprotein complex responsible for the synthesis of proteins in the cell. The sequence is that of Large ribosomal subunit protein eL8 (RPL7A) from Sus scrofa (Pig).